An 886-amino-acid chain; its full sequence is Envelope glycoprotein GP350 (886 aa).

Over 1-839 (MEAALLVCQY…TSQPRFSNLS (839 aa)) the chain is Virion surface. 28 N-linked (GlcNAc...) asparagine; by host glycosylation sites follow: asparagine 47, asparagine 87, asparagine 114, asparagine 166, asparagine 169, asparagine 195, asparagine 229, asparagine 277, asparagine 318, asparagine 328, asparagine 345, asparagine 356, asparagine 378, asparagine 386, asparagine 411, asparagine 435, asparagine 443, asparagine 457, asparagine 497, asparagine 519, asparagine 533, asparagine 554, asparagine 568, asparagine 589, asparagine 603, asparagine 606, asparagine 624, and asparagine 635. Residues 423–810 (KAPESTTTSP…PSTSSKLRPR (388 aa)) are disordered. Residues 428–437 (TTTSPTLNTT) are compositionally biased toward low complexity. The segment covering 442-488 (PNTTTGLPSSTHVPTNLTAPASTGPTVSTADVTSPTPAGTTSGASPV) has biased composition (polar residues). A compositionally biased stretch (low complexity) spans 507–595 (TSPTSAVTTP…PTPNATSPTV (89 aa)). Polar residues predominate over residues 596 to 637 (GETSPQANTTNHTLGGTSSTPVVTSPPKNATSAVTTGQHNIT). The segment covering 638-660 (SSSTSSMSLRPSSISETLSPSTS) has biased composition (low complexity). 2 N-linked (GlcNAc...) asparagine; by host glycosylation sites follow: asparagine 662 and asparagine 680. Over residues 684–699 (VTPASTSTHHVSTSSP) the composition is skewed to low complexity. Over residues 704–720 (GTTSQASGPGNSSTSTK) the composition is skewed to polar residues. 4 N-linked (GlcNAc...) asparagine; by host glycosylation sites follow: asparagine 714, asparagine 725, asparagine 734, and asparagine 759. Residues 733–760 (KNATSPQAPSGQKTAVPTVTSTGGKANS) show a composition bias toward polar residues. A compositionally biased stretch (low complexity) spans 761 to 771 (TTGGKHTTGHG). Residues 773–806 (RTSTEPTTDYGGDSTTPRTRYNATTYLPPSTSSK) show a composition bias toward polar residues. 2 N-linked (GlcNAc...) asparagine; by host glycosylation sites follow: asparagine 794 and asparagine 837. Residues 840–860 (MLVLQWASLAVLTLLLLLVMA) traverse the membrane as a helical segment. At 861–886 (DCAFRRNLSTSHTYTTPPYDDAETYV) the chain is on the intravirion side.

This sequence belongs to the Epstein-Barr GP350 family. As to quaternary structure, interacts with host CR2. Post-translationally, extensively glycosylated.

It is found in the virion membrane. The protein resides in the host membrane. In terms of biological role, initiates virion attachment to host B-lymphocyte cell, leading to virus entry. Acts by binding to host CR2 at the surface of B-lymphocytes, facilitating the binding of viral glycoprotein gp42 to HLA class II molecules. Attachment triggers virion-host membrane fusion and invasion of the host cell. The sequence is that of Envelope glycoprotein GP350 from Homo sapiens (Human).